Here is a 135-residue protein sequence, read N- to C-terminus: uncharacterized protein (135 aa).

This is an uncharacterized protein from Schizosaccharomyces pombe (strain 972 / ATCC 24843) (Fission yeast).